Consider the following 356-residue polypeptide: 3-dehydroquinate synthase (356 aa).

NAD(+) is bound by residues 106 to 110 (GVVGD), 130 to 131 (TT), Lys-143, and Lys-152. 3 residues coordinate Zn(2+): Glu-185, His-248, and His-265.

The protein belongs to the sugar phosphate cyclases superfamily. Dehydroquinate synthase family. It depends on Co(2+) as a cofactor. Zn(2+) serves as cofactor. Requires NAD(+) as cofactor.

Its subcellular location is the cytoplasm. It carries out the reaction 7-phospho-2-dehydro-3-deoxy-D-arabino-heptonate = 3-dehydroquinate + phosphate. The protein operates within metabolic intermediate biosynthesis; chorismate biosynthesis; chorismate from D-erythrose 4-phosphate and phosphoenolpyruvate: step 2/7. Catalyzes the conversion of 3-deoxy-D-arabino-heptulosonate 7-phosphate (DAHP) to dehydroquinate (DHQ). The polypeptide is 3-dehydroquinate synthase (Thermoanaerobacter sp. (strain X514)).